Reading from the N-terminus, the 296-residue chain is 33 kDa chaperonin (296 aa).

2 cysteine pairs are disulfide-bonded: C233–C235 and C267–C270.

The protein belongs to the HSP33 family. In terms of processing, under oxidizing conditions two disulfide bonds are formed involving the reactive cysteines. Under reducing conditions zinc is bound to the reactive cysteines and the protein is inactive.

It localises to the cytoplasm. Functionally, redox regulated molecular chaperone. Protects both thermally unfolding and oxidatively damaged proteins from irreversible aggregation. Plays an important role in the bacterial defense system toward oxidative stress. The protein is 33 kDa chaperonin of Actinobacillus pleuropneumoniae serotype 7 (strain AP76).